A 314-amino-acid chain; its full sequence is MAQYTIECVETRTEADNGQYGKFVLEPLERGQGTTLGNALRRVLLSNLEGTAVTAVRITGVNHEFATMKGIREDVLDILLNMKELVLRSYTSDIQIGRLAVQGPKRVTAADLELPTEVQVVHPRHYIATLAEDGQLEMEFQIERGKGYRAIERGSEDGAAIDYLSIDAIFMPVRKVNWTVESERSAANVEQDRLTLEIWTSGSLSPQEALSQAAKILVDQLRPLQEITFEPPAEPQRSAPNTVGQVPIEELQLSVRAYNCLKRAQINTVADLLEYTEEDLLEIKNFGQKSAEEVIEALQDKMGLSLPKDKPARS.

The interval 1–228 (MAQYTIECVE…DQLRPLQEIT (228 aa)) is alpha N-terminal domain (alpha-NTD). The alpha C-terminal domain (alpha-CTD) stretch occupies residues 241-314 (NTVGQVPIEE…SLPKDKPARS (74 aa)).

The protein belongs to the RNA polymerase alpha chain family. In terms of assembly, in cyanobacteria the RNAP catalytic core is composed of 2 alpha, 1 beta, 1 beta', 1 gamma and 1 omega subunit. When a sigma factor is associated with the core the holoenzyme is formed, which can initiate transcription.

The catalysed reaction is RNA(n) + a ribonucleoside 5'-triphosphate = RNA(n+1) + diphosphate. Functionally, DNA-dependent RNA polymerase catalyzes the transcription of DNA into RNA using the four ribonucleoside triphosphates as substrates. The sequence is that of DNA-directed RNA polymerase subunit alpha from Gloeobacter violaceus (strain ATCC 29082 / PCC 7421).